The primary structure comprises 372 residues: MRITLQYIKLESKNTKERDMAESKAIGRSLEVPNVQELAKGKLASVPARYVRYSDRENTTLPPLTQIPVIDMQALLHPNSFEAELNSLHKACKQWGFFQLINHGVEAAVMEKMKLEMQEFFNLPLEEKQKFRQSADDMEGYGQSFVVSDEQKLDWADGFSVISLPTYLRKPHLIPKLPAPFRDAIDAYGAQLKELAIKILGFMAEALGMDPHEMTALFEEGIQALRMNYYPPCPQPEMVSGLCPHSDAGGLTILMQVNEVEGLQVRKDGGWVPVSPLPDAFIINLGDILEIVTNGEYFSVEHQATVNGDKERLSVAAFLNPKMEDNIGPAASFISGETPAKFKTITAAEYFKGLFSKELDGKSYLDLMRIQN.

Residues 221 to 321 (GIQALRMNYY…RLSVAAFLNP (101 aa)) form the Fe2OG dioxygenase domain. Residues histidine 245, aspartate 247, and histidine 302 each coordinate Fe cation. Residue arginine 312 coordinates 2-oxoglutarate.

Belongs to the iron/ascorbate-dependent oxidoreductase family. As to quaternary structure, monomer. Fe(2+) is required as a cofactor. L-ascorbate serves as cofactor. In terms of tissue distribution, accumulates in the trichomes of nevadensin-accumulating strains (e.g. cv. SD and cv. EMX-1) and in cv. SW (at protein level) but not in cv. MC.

The protein localises to the cytoplasm. The catalysed reaction is gardenin B + 2-oxoglutarate + O2 = nevadensin + formaldehyde + succinate + CO2 + H(+). It catalyses the reaction 8-hydroxysalvigenin + 2-oxoglutarate + O2 = pilosin + formaldehyde + succinate + CO2. It functions in the pathway flavonoid metabolism. With respect to regulation, inhibited by prohexadione-calcium, a 2-oxoglutarate-dependent dioxygenase (2-ODD) inhibitor, thus leading to a decreased abundance of nevadensin (NEV) and absence of pilosin (PIL) production, but to the accumulation of gardenin B (GARD B) and 8-hydroxysalvigenin (8-OH-SALV). Its function is as follows. Oxoglutarate-dependent dioxygenase (2-ODD) acting as a flavonoid 7-O-demethylase involved in the biosynthesis of polymethoxylated flavonoids natural products such as nevadensin and salvigenin, aroma compounds which contribute to the flavor of sweet basil, and exhibit pharmacological activities such as anti-allergic, anti-oxidant, antibacterial, anti-proliferative, and anti-inflammatory effects. Catalyzes the 7-O-demethylation of methoxylated flavones; mediates the conversion of 8-hydroxysalvigenin (8-OH-SALV) to pilosin (PIL) and of gardenin B (GARD B) to nevadensin (NEV). The polypeptide is Oxoglutarate-dependent flavonoid 7-O-demethylase 1 (Ocimum basilicum (Sweet basil)).